We begin with the raw amino-acid sequence, 43 residues long: Protein PsbN (43 aa).

A helical transmembrane segment spans residues 5–27 (NLVTISISCLLVSLTGYAIYTSF).

It belongs to the PsbN family.

The protein resides in the plastid. Its subcellular location is the chloroplast thylakoid membrane. Its function is as follows. May play a role in photosystem I and II biogenesis. This chain is Protein PsbN, found in Gnetum gnemon (Spanish joint-fir).